We begin with the raw amino-acid sequence, 492 residues long: N-succinylglutamate 5-semialdehyde dehydrogenase (492 aa).

An NAD(+)-binding site is contributed by 220-225 (GSANTG). Active-site residues include Glu243 and Cys277.

The protein belongs to the aldehyde dehydrogenase family. AstD subfamily.

The enzyme catalyses N-succinyl-L-glutamate 5-semialdehyde + NAD(+) + H2O = N-succinyl-L-glutamate + NADH + 2 H(+). Its pathway is amino-acid degradation; L-arginine degradation via AST pathway; L-glutamate and succinate from L-arginine: step 4/5. Catalyzes the NAD-dependent reduction of succinylglutamate semialdehyde into succinylglutamate. This is N-succinylglutamate 5-semialdehyde dehydrogenase from Escherichia coli (strain SE11).